A 216-amino-acid polypeptide reads, in one-letter code: Holliday junction branch migration complex subunit RuvA (216 aa).

The interval 1-64 (MISFIKGVLI…EDAQQLYGFK (64 aa)) is domain I. The tract at residues 65 to 143 (SKVDKKVFQE…KMANEIYAQT (79 aa)) is domain II. The interval 144–163 (SGTTTTSQDSQAQQAPTSVV) is flexible linker. The domain III stretch occupies residues 164–216 (LANSIFNESVDALLALGYKQKDAEKMARSAMGDATTAAEVIRKALQGSIKSKG).

This sequence belongs to the RuvA family. In terms of assembly, homotetramer. Forms an RuvA(8)-RuvB(12)-Holliday junction (HJ) complex. HJ DNA is sandwiched between 2 RuvA tetramers; dsDNA enters through RuvA and exits via RuvB. An RuvB hexamer assembles on each DNA strand where it exits the tetramer. Each RuvB hexamer is contacted by two RuvA subunits (via domain III) on 2 adjacent RuvB subunits; this complex drives branch migration. In the full resolvosome a probable DNA-RuvA(4)-RuvB(12)-RuvC(2) complex forms which resolves the HJ.

It localises to the cytoplasm. Its function is as follows. The RuvA-RuvB-RuvC complex processes Holliday junction (HJ) DNA during genetic recombination and DNA repair, while the RuvA-RuvB complex plays an important role in the rescue of blocked DNA replication forks via replication fork reversal (RFR). RuvA specifically binds to HJ cruciform DNA, conferring on it an open structure. The RuvB hexamer acts as an ATP-dependent pump, pulling dsDNA into and through the RuvAB complex. HJ branch migration allows RuvC to scan DNA until it finds its consensus sequence, where it cleaves and resolves the cruciform DNA. This Francisella tularensis subsp. holarctica (strain FTNF002-00 / FTA) protein is Holliday junction branch migration complex subunit RuvA.